Reading from the N-terminus, the 374-residue chain is Probable inactive patatin-3-Kuras 1 (374 aa).

The N-terminal stretch at 1-11 (MMLATTSSTFA) is a signal peptide. Residues 20–217 (LSIDGGGIKG…AAVDPSLLSI (198 aa)) enclose the PNPLA domain. Positions 24–29 (GGGIKG) match the GXGXXG motif. N-linked (GlcNAc...) asparagine glycans are attached at residues N48 and N191. D204 (proton acceptor) is an active-site residue. The N-linked (GlcNAc...) asparagine glycan is linked to N257.

The protein belongs to the patatin family. In terms of processing, N-glycosylated. In terms of tissue distribution, tuber.

It localises to the vacuole. The polypeptide is Probable inactive patatin-3-Kuras 1 (pat3-k1) (Solanum tuberosum (Potato)).